The following is a 451-amino-acid chain: Chromosomal replication initiator protein DnaA (451 aa).

The segment at 1–101 (MTENETIFWN…TSNHIFSRQT (101 aa)) is domain I, interacts with DnaA modulators. The interval 101 to 110 (TINSLPAITS) is domain II. The domain III, AAA+ region stretch occupies residues 111-329 (DLNPKYSFDN…GALKDISLVA (219 aa)). Residues G155, G157, K158, and T159 each contribute to the ATP site. A domain IV, binds dsDNA region spans residues 330-451 (NFKEIDKITV…EIETIKNKIK (122 aa)).

This sequence belongs to the DnaA family. Oligomerizes as a right-handed, spiral filament on DNA at oriC.

Its subcellular location is the cytoplasm. In terms of biological role, plays an essential role in the initiation and regulation of chromosomal replication. ATP-DnaA binds to the origin of replication (oriC) to initiate formation of the DNA replication initiation complex once per cell cycle. Binds the DnaA box (a 9 base pair repeat at the origin) and separates the double-stranded (ds)DNA. Forms a right-handed helical filament on oriC DNA; dsDNA binds to the exterior of the filament while single-stranded (ss)DNA is stabiized in the filament's interior. The ATP-DnaA-oriC complex binds and stabilizes one strand of the AT-rich DNA unwinding element (DUE), permitting loading of DNA polymerase. After initiation quickly degrades to an ADP-DnaA complex that is not apt for DNA replication. Binds acidic phospholipids. This chain is Chromosomal replication initiator protein DnaA, found in Streptococcus uberis (strain ATCC BAA-854 / 0140J).